A 119-amino-acid chain; its full sequence is Thioredoxin H4 (119 aa).

Positions 2–115 constitute a Thioredoxin domain; that stretch reads AAEEGQVIGC…LQAKIVKHTG (114 aa). Residues Cys40 and Cys43 each act as nucleophile in the active site. Residues Cys40 and Cys43 are joined by a disulfide bond.

Belongs to the thioredoxin family. Plant H-type subfamily. In terms of assembly, interacts with MDH1.

It is found in the cytoplasm. Thiol-disulfide oxidoreductase probably involved in the redox regulation of a number of cytosolic enzymes. Possesses insulin disulfide bonds reducing activity. This chain is Thioredoxin H4 (TRX4), found in Arabidopsis thaliana (Mouse-ear cress).